The following is a 907-amino-acid chain: MATPDQKSPNVLLQNLCCRILGRSEADVAQQFQYAVRVIGSNFAPTVERDEFLVAEKIKKELIRQRREADAALFSELHRKLHSQGVLKNKWSILYLLLSLSEDPRRQPSKVSSYATLFAQALPRDAHSTPYYYARPQTLPLSYQDRSAQSAQSSGSVGSSGISSIGLCALSGPAPAPQSLLPGQSNQAPGVGDCLRQQLGSRLAWTLTANQPSSQATTSKGVPSAVSRNMTRSRREGDTGGTMEITEAALVRDILYVFQGIDGKNIKMNNTENCYKVEGKANLSRSLRDTAVRLSELGWLHNKIRRYTDQRSLDRSFGLVGQSFCAALHQELREYYRLLSVLHSQLQLEDDQGVNLGLESSLTLRRLLVWTYDPKIRLKTLAALVDHCQGRKGGELASAVHAYTKTGDPYMRSLVQHILSLVSHPVLSFLYRWIYDGELEDTYHEFFVASDPTVKTDRLWHDKYTLRKSMIPSFMTMDQSRKVLLIGKSINFLHQVCHDQTPTTKMIAVTKSAESPQDAADLFTDLENAFQGKIDAAYFETSKYLLDVLNKKYSLLDHMQAMRRYLLLGQGDFIRHLMDLLKPELVRPATTLYQHNLTGILETAVRATNAQFDSPEILRRLDVRLLEVSPGDTGWDVFSLDYHVDGPIATVFTRECMSHYLRVFNFLWRAKRMEYILTDIRKGHMCNAKLLRNMPEFSGVLHQCHILASEMVHFIHQMQYYITFEVLECSWDELWNKVQQAQDLDHIIAAHEVFLDTIISRCLLDSDSRALLNQLRAVFDQIIELQNAQDAIYRAALEELQRRLQFEEKKKQREIEGQWGVTAAEEEEENKRIGEFKESIPKMCSQLRILTHFYQGIVQQFLVLLTTSSDESLRFLSFRLDFNEHYKAREPRLRVSLGTRGRRSSHT.

N-acetylalanine is present on alanine 2. Serine 113 bears the Phosphoserine mark. Positions 210–230 (NQPSSQATTSKGVPSAVSRNM) are enriched in polar residues. The tract at residues 210–241 (NQPSSQATTSKGVPSAVSRNMTRSRREGDTGG) is disordered.

This sequence belongs to the TUBGCP family. Component of the gamma-tubulin ring complex (gTuRC) consisting of TUBGCP2, TUBGCP3, TUBGCP4, TUBGCP5 and TUBGCP6 and gamma-tubulin TUBG1 or TUBG2. TUBGCP2, TUBGCP3, TUBGCP4, TUBGCP5 and TUBGCP6 assemble in a 5:5:2:1:1 stoichiometry; each is associated with a gamma-tubulin, thereby arranging 14 gamma-tubulins in a helical manner. Gamma-tubulin at the first position is blocked by TUBGCP3 at the last position, allowing 13 protafilaments to grow into a microtubule. The gTuRC (via TUBGCP3 and TUBGCP6) interacts with ACTB and MZT1; the interactions form a luminal bridge that stabilizes the initial structure during complex assembly. The gTuRC (via TUBGCP2) interacts with MZT2A/MZT2B and CDK5RAP2 (via CM1 motif); the interactions play a role in gTuRC activation. Interacts with NIN (via N-terminus); the interaction may promote recruitment of the gamma-tubulin ring complex to the centrosome. In terms of tissue distribution, ubiquitously expressed.

It localises to the cytoplasm. It is found in the cytoskeleton. The protein resides in the microtubule organizing center. Its subcellular location is the centrosome. Functionally, component of the gamma-tubulin ring complex (gTuRC) which mediates microtubule nucleation. The gTuRC regulates the minus-end nucleation of alpha-beta tubulin heterodimers that grow into microtubule protafilaments, a critical step in centrosome duplication and spindle formation. In Homo sapiens (Human), this protein is Gamma-tubulin complex component 3 (TUBGCP3).